The primary structure comprises 232 residues: Histone H1-II (232 aa).

The segment covering Met1–Ala18 has biased composition (low complexity). Disordered regions lie at residues Met1–Ser44 and Gly103–Ala232. One can recognise an H15 domain in the interval Thr39–Ala114. Basic residues-rich tracts occupy residues Ser149–Lys171 and Ala179–Ala232.

It belongs to the histone H1/H5 family.

It is found in the nucleus. It localises to the chromosome. Functionally, histones H1 are necessary for the condensation of nucleosome chains into higher-order structures. The protein is Histone H1-II of Glyptotendipes barbipes (Midge).